The following is a 152-amino-acid chain: Transcriptional repressor NrdR (152 aa).

The span at 1–10 shows a compositional bias: polar residues; sequence MKCPSCQHNG. Positions 1–21 are disordered; sequence MKCPSCQHNGSRVLDSRPADE. A zinc finger lies at 3–34; sequence CPSCQHNGSRVLDSRPADEGKSIRRRRECEAC. The ATP-cone domain maps to 49 to 139; sequence LIVVKKEGVR…VYRQFKDINV (91 aa).

The protein belongs to the NrdR family. Requires Zn(2+) as cofactor.

In terms of biological role, negatively regulates transcription of bacterial ribonucleotide reductase nrd genes and operons by binding to NrdR-boxes. This Bacillus velezensis (strain DSM 23117 / BGSC 10A6 / LMG 26770 / FZB42) (Bacillus amyloliquefaciens subsp. plantarum) protein is Transcriptional repressor NrdR.